The following is a 104-amino-acid chain: Integration host factor subunit beta (104 aa).

Positions 83-95 (GKEMRERLNRDSG) are enriched in basic and acidic residues. The segment at 83-104 (GKEMRERLNRDSGDDAPTSDTA) is disordered.

It belongs to the bacterial histone-like protein family. Heterodimer of an alpha and a beta chain.

This protein is one of the two subunits of integration host factor, a specific DNA-binding protein that functions in genetic recombination as well as in transcriptional and translational control. This Rhodopseudomonas palustris (strain ATCC BAA-98 / CGA009) protein is Integration host factor subunit beta.